A 695-amino-acid chain; its full sequence is RING finger protein 145 (695 aa).

13 consecutive transmembrane segments (helical) span residues 53–73 (YLAL…LTLP), 77–97 (LAKL…HQIS), 123–143 (FITA…VMKT), 146–166 (IWLF…VPIE), 168–188 (IVVI…YFLA), 225–245 (LVVP…QIYT), 275–295 (YSLL…LTLC), 316–336 (TEGV…LQVV), 340–360 (FLLS…MLEI), 384–404 (SLCL…CQFF), 410–430 (LLII…TLFI), 460–480 (LLEF…TVFG), and 482–502 (WTVM…WLRA). The RING-type; atypical zinc-finger motif lies at 537–575 (CSICYQDMNSAVITPCSHFFHPGCLKKWLYVQETCPLCH). Residues 585–603 (ATGESGSSTNPVSEQSATN) show a composition bias toward polar residues. A disordered region spans residues 585 to 610 (ATGESGSSTNPVSEQSATNPPLGPVS).

The protein resides in the membrane. The protein is RING finger protein 145 (rnf145) of Xenopus tropicalis (Western clawed frog).